Here is a 208-residue protein sequence, read N- to C-terminus: Outer-membrane lipoprotein carrier protein (208 aa).

The first 22 residues, 1–22 (MKKIFTIAALSLPLFCHLPAMA), serve as a signal peptide directing secretion.

Belongs to the LolA family. As to quaternary structure, monomer.

The protein resides in the periplasm. Functionally, participates in the translocation of lipoproteins from the inner membrane to the outer membrane. Only forms a complex with a lipoprotein if the residue after the N-terminal Cys is not an aspartate (The Asp acts as a targeting signal to indicate that the lipoprotein should stay in the inner membrane). The polypeptide is Outer-membrane lipoprotein carrier protein (Shewanella pealeana (strain ATCC 700345 / ANG-SQ1)).